The following is a 65-amino-acid chain: Photosystem II reaction center protein J (65 aa).

Residues 1–18 (MSSKLKGPDGRLPDRLPD) show a composition bias toward basic and acidic residues. The interval 1-21 (MSSKLKGPDGRLPDRLPDGRP) is disordered. Residues 36–56 (LWLVATAGGIAVIFVLGIFFY) form a helical membrane-spanning segment.

It belongs to the PsbJ family. In terms of assembly, PSII is composed of 1 copy each of membrane proteins PsbA, PsbB, PsbC, PsbD, PsbE, PsbF, PsbH, PsbI, PsbJ, PsbK, PsbL, PsbM, PsbT, PsbX, PsbY, Psb30/Ycf12, peripheral proteins PsbO, CyanoQ (PsbQ), PsbU, PsbV and a large number of cofactors. It forms dimeric complexes.

It localises to the cellular thylakoid membrane. One of the components of the core complex of photosystem II (PSII). PSII is a light-driven water:plastoquinone oxidoreductase that uses light energy to abstract electrons from H(2)O, generating O(2) and a proton gradient subsequently used for ATP formation. It consists of a core antenna complex that captures photons, and an electron transfer chain that converts photonic excitation into a charge separation. The sequence is that of Photosystem II reaction center protein J from Prochlorococcus marinus (strain SARG / CCMP1375 / SS120).